A 553-amino-acid chain; its full sequence is Dihydroxy-acid dehydratase (553 aa).

Residue Asp-78 participates in Mg(2+) binding. [2Fe-2S] cluster is bound at residue Cys-119. Residues Asp-120 and Lys-121 each contribute to the Mg(2+) site. N6-carboxylysine is present on Lys-121. Residue Cys-191 participates in [2Fe-2S] cluster binding. Glu-442 serves as a coordination point for Mg(2+). Ser-468 (proton acceptor) is an active-site residue.

The protein belongs to the IlvD/Edd family. In terms of assembly, homodimer. The cofactor is [2Fe-2S] cluster. Requires Mg(2+) as cofactor.

The enzyme catalyses (2R)-2,3-dihydroxy-3-methylbutanoate = 3-methyl-2-oxobutanoate + H2O. It catalyses the reaction (2R,3R)-2,3-dihydroxy-3-methylpentanoate = (S)-3-methyl-2-oxopentanoate + H2O. The protein operates within amino-acid biosynthesis; L-isoleucine biosynthesis; L-isoleucine from 2-oxobutanoate: step 3/4. It participates in amino-acid biosynthesis; L-valine biosynthesis; L-valine from pyruvate: step 3/4. Its function is as follows. Functions in the biosynthesis of branched-chain amino acids. Catalyzes the dehydration of (2R,3R)-2,3-dihydroxy-3-methylpentanoate (2,3-dihydroxy-3-methylvalerate) into 2-oxo-3-methylpentanoate (2-oxo-3-methylvalerate) and of (2R)-2,3-dihydroxy-3-methylbutanoate (2,3-dihydroxyisovalerate) into 2-oxo-3-methylbutanoate (2-oxoisovalerate), the penultimate precursor to L-isoleucine and L-valine, respectively. This chain is Dihydroxy-acid dehydratase, found in Carboxydothermus hydrogenoformans (strain ATCC BAA-161 / DSM 6008 / Z-2901).